A 111-amino-acid chain; its full sequence is Carboxysome shell protein CcmK1 (111 aa).

Residues 4-90 (AVGMIETLGF…PHENLEYVLP (87 aa)) enclose the BMC domain.

Belongs to the bacterial microcompartments protein family. CcmK subfamily. Homohexamer. Interacts with full-length CcmM. Forms mixed heterohexamers of all possible stoichiometries with CcmK2, which might form dodecamers. Only very weak interactions with CcmK3 and CcmK4 were seen. Interacts with CcmN and CcmO in the carboxysome.

The protein localises to the carboxysome. Its function is as follows. One of the shell proteins of the carboxysome, a polyhedral inclusion where RuBisCO (ribulose bisphosphate carboxylase, rbcL-rbcS) is sequestered. Assembles into hexamers which make sheets that form the facets of the polyhedral carboxysome. The hexamer central pore probably regulates metabolite flux. Functionally, probably the major shell protein of the carboxysome, a polyhedral inclusion where RuBisCO (ribulose bisphosphate carboxylase, rbcL-rbcS) is sequestered. The central pore probably regulates metabolite flux. Hexamers make sheets that form the facets of the carboxysome. The polypeptide is Carboxysome shell protein CcmK1 (Synechocystis sp. (strain ATCC 27184 / PCC 6803 / Kazusa)).